Consider the following 84-residue polypeptide: Small ribosomal subunit protein uS17 (84 aa).

It belongs to the universal ribosomal protein uS17 family. In terms of assembly, part of the 30S ribosomal subunit.

Functionally, one of the primary rRNA binding proteins, it binds specifically to the 5'-end of 16S ribosomal RNA. This chain is Small ribosomal subunit protein uS17, found in Borrelia garinii subsp. bavariensis (strain ATCC BAA-2496 / DSM 23469 / PBi) (Borreliella bavariensis).